The chain runs to 238 residues: Probable transcriptional regulatory protein SPD_1725 (238 aa).

Belongs to the TACO1 family. YeeN subfamily.

It localises to the cytoplasm. This chain is Probable transcriptional regulatory protein SPD_1725, found in Streptococcus pneumoniae serotype 2 (strain D39 / NCTC 7466).